We begin with the raw amino-acid sequence, 674 residues long: Translation initiation factor IF-2 (674 aa).

One can recognise a tr-type G domain in the interval 174-344 (IRPPVVTVMG…LLVAELREIK (171 aa)). Residues 183–190 (GHVDHGKT) form a G1 region. Residue 183-190 (GHVDHGKT) participates in GTP binding. The tract at residues 208–212 (GITQS) is G2. A G3 region spans residues 229–232 (DTPG). Residues 229–233 (DTPGH) and 283–286 (NKID) contribute to the GTP site. The G4 stretch occupies residues 283–286 (NKID). Residues 320-322 (SAR) are G5.

It belongs to the TRAFAC class translation factor GTPase superfamily. Classic translation factor GTPase family. IF-2 subfamily.

The protein localises to the cytoplasm. In terms of biological role, one of the essential components for the initiation of protein synthesis. Protects formylmethionyl-tRNA from spontaneous hydrolysis and promotes its binding to the 30S ribosomal subunits. Also involved in the hydrolysis of GTP during the formation of the 70S ribosomal complex. This is Translation initiation factor IF-2 from Pseudothermotoga lettingae (strain ATCC BAA-301 / DSM 14385 / NBRC 107922 / TMO) (Thermotoga lettingae).